We begin with the raw amino-acid sequence, 301 residues long: GTPase Era (301 aa).

An Era-type G domain is found at tyrosine 7–glutamate 175. The interval glycine 15 to serine 22 is G1. Glycine 15–serine 22 serves as a coordination point for GTP. The interval glutamine 41–histidine 45 is G2. The tract at residues aspartate 62–glycine 65 is G3. GTP-binding positions include aspartate 62–leucine 66 and asparagine 124–aspartate 127. Residues asparagine 124 to aspartate 127 form a G4 region. Residues isoleucine 154–alanine 156 are G5. In terms of domain architecture, KH type-2 spans leucine 206–serine 283.

It belongs to the TRAFAC class TrmE-Era-EngA-EngB-Septin-like GTPase superfamily. Era GTPase family. As to quaternary structure, monomer.

The protein localises to the cytoplasm. It localises to the cell inner membrane. An essential GTPase that binds both GDP and GTP, with rapid nucleotide exchange. Plays a role in 16S rRNA processing and 30S ribosomal subunit biogenesis and possibly also in cell cycle regulation and energy metabolism. This chain is GTPase Era, found in Escherichia fergusonii (strain ATCC 35469 / DSM 13698 / CCUG 18766 / IAM 14443 / JCM 21226 / LMG 7866 / NBRC 102419 / NCTC 12128 / CDC 0568-73).